We begin with the raw amino-acid sequence, 897 residues long: F-BAR domain only protein 1 (897 aa).

Residues 1 to 276 are mediates membrane-binding; it reads MIHFFHTLQG…VGFEEYLSSL (276 aa). Positions 2–248 constitute an F-BAR domain; that stretch reads IHFFHTLQGE…NVENIGIENL (247 aa). Residues 134 to 154 adopt a coiled-coil conformation; it reads LQKTREGYHSKCVELERLRKE. The interval 475–537 is disordered; it reads VEDSGLDSPS…PNPAPSSQSN (63 aa). A compositionally biased stretch (polar residues) spans 501–520; the sequence is PSSQSQSKDSINAASQSRGG. In terms of domain architecture, MHD spans 630–894; it reads SWPVAAAITE…RFATGKYMAG (265 aa).

Belongs to the FCHO family. As to quaternary structure, may oligomerize and form homotetramer. Interacts with acvr1l/alk8; linking this receptor to clathrin-mediated endocytosis.

Its subcellular location is the membrane. The protein localises to the clathrin-coated pit. May function in an early step of clathrin-mediated endocytosis. May regulate Bmp signaling by regulating clathrin-mediated endocytosis of Bmp receptors. This chain is F-BAR domain only protein 1 (fcho1), found in Danio rerio (Zebrafish).